A 320-amino-acid chain; its full sequence is Ferrochelatase (320 aa).

2 residues coordinate Fe cation: His194 and Glu275.

The protein belongs to the ferrochelatase family.

Its subcellular location is the cytoplasm. It carries out the reaction heme b + 2 H(+) = protoporphyrin IX + Fe(2+). It participates in porphyrin-containing compound metabolism; protoheme biosynthesis; protoheme from protoporphyrin-IX: step 1/1. Catalyzes the ferrous insertion into protoporphyrin IX. This is Ferrochelatase from Vibrio cholerae serotype O1 (strain ATCC 39315 / El Tor Inaba N16961).